Consider the following 217-residue polypeptide: Adenylate kinase (217 aa).

10–15 lines the ATP pocket; that stretch reads GAGKGT. The interval 30-59 is NMP; that stretch reads STGDMFRAAMKEGTPLGLQAKEYIDRGDLV. Residues threonine 31, arginine 36, 57–59, 85–88, and glutamine 92 each bind AMP; these read DLV and GFPR. The tract at residues 126 to 163 is LID; it reads GRRICRNCGATYHLVFHPPAQPGVCDKCGGELYQRPDD. Arginine 127 lines the ATP pocket. Cysteine 130 and cysteine 133 together coordinate Zn(2+). Residue 136–137 coordinates ATP; it reads TY. Residues cysteine 150 and cysteine 153 each contribute to the Zn(2+) site. Positions 160 and 171 each coordinate AMP. Glutamine 199 lines the ATP pocket.

This sequence belongs to the adenylate kinase family. Monomer.

It localises to the cytoplasm. It catalyses the reaction AMP + ATP = 2 ADP. Its pathway is purine metabolism; AMP biosynthesis via salvage pathway; AMP from ADP: step 1/1. Its function is as follows. Catalyzes the reversible transfer of the terminal phosphate group between ATP and AMP. Plays an important role in cellular energy homeostasis and in adenine nucleotide metabolism. The polypeptide is Adenylate kinase (Geobacillus thermodenitrificans (strain NG80-2)).